A 464-amino-acid polypeptide reads, in one-letter code: Protein FAM90A3 (464 aa).

Disordered regions lie at residues 1 to 42 (MMAR…DPRL), 70 to 389 (PATL…HDGA), and 411 to 437 (APSFHSPEKPGAFLAQSPHVSEKSEAP). 2 stretches are compositionally biased toward basic and acidic residues: residues 74–89 (GKKEGKENLKPWKPRV) and 97–114 (NKDKGEKEERPRQQDPQR). Residues 180-197 (LASLSPLRKASLSSSSSL) show a composition bias toward low complexity.

Belongs to the FAM90 family.

This is Protein FAM90A3 from Homo sapiens (Human).